The following is a 1003-amino-acid chain: Glycine--tRNA ligase (1003 aa).

The interval 1–310 is glycine--tRNA ligase alpha subunit; it reads MSSQPLTLQA…VTPKKIPTIC (310 aa). A glycine--tRNA ligase beta subunit region spans residues 311–1003; sequence QPEDFLLEIG…CFGFYAWDVL (693 aa).

It belongs to the class-II aminoacyl-tRNA synthetase family.

It is found in the cytoplasm. The catalysed reaction is tRNA(Gly) + glycine + ATP = glycyl-tRNA(Gly) + AMP + diphosphate. The polypeptide is Glycine--tRNA ligase (glyQS) (Chlamydia trachomatis serovar L2 (strain ATCC VR-902B / DSM 19102 / 434/Bu)).